A 346-amino-acid chain; its full sequence is Phosphoribosylformylglycinamidine cyclo-ligase (346 aa).

This sequence belongs to the AIR synthase family.

It is found in the cytoplasm. The enzyme catalyses 2-formamido-N(1)-(5-O-phospho-beta-D-ribosyl)acetamidine + ATP = 5-amino-1-(5-phospho-beta-D-ribosyl)imidazole + ADP + phosphate + H(+). Its pathway is purine metabolism; IMP biosynthesis via de novo pathway; 5-amino-1-(5-phospho-D-ribosyl)imidazole from N(2)-formyl-N(1)-(5-phospho-D-ribosyl)glycinamide: step 2/2. The sequence is that of Phosphoribosylformylglycinamidine cyclo-ligase from Colwellia psychrerythraea (strain 34H / ATCC BAA-681) (Vibrio psychroerythus).